The sequence spans 304 residues: MDKENLYQEFVALMGEEHVFLEEPMKKHTSFKIGGPADLLVMPRTVEEIRQSVEICKKSKTPYFVMGNGSNLLVRDKGMRCVVIKIAENFNEVRFEGNHVIVQTGILLSTLSNQIARACLKGFEFANGIPGTVGGAITMNAGAYGGEMKDVVKSCKVLNHQGEIIDLSLEELELDYRTSIIQEKGYIALEVVLALQEGKYEEIRSIIDDLTVKRTTKQPLHLPCAGSVFKRPPGYFAGKLIQDCNLKGFKIGGAQVSELHSGFIVNIDNASAADVLNLIAHIQKQVKEKFDVGLHNEVRVVGEV.

The FAD-binding PCMH-type domain occupies 33–198 (IGGPADLLVM…LEVVLALQEG (166 aa)). Arginine 177 is a catalytic residue. The active-site Proton donor is the serine 227. Glutamate 297 is an active-site residue.

Belongs to the MurB family. Requires FAD as cofactor.

The protein localises to the cytoplasm. The enzyme catalyses UDP-N-acetyl-alpha-D-muramate + NADP(+) = UDP-N-acetyl-3-O-(1-carboxyvinyl)-alpha-D-glucosamine + NADPH + H(+). The protein operates within cell wall biogenesis; peptidoglycan biosynthesis. Functionally, cell wall formation. The sequence is that of UDP-N-acetylenolpyruvoylglucosamine reductase from Alkaliphilus metalliredigens (strain QYMF).